We begin with the raw amino-acid sequence, 229 residues long: Large ribosomal subunit protein uL1 (229 aa).

Belongs to the universal ribosomal protein uL1 family. In terms of assembly, part of the 50S ribosomal subunit.

Its function is as follows. Binds directly to 23S rRNA. The L1 stalk is quite mobile in the ribosome, and is involved in E site tRNA release. Protein L1 is also a translational repressor protein, it controls the translation of the L11 operon by binding to its mRNA. This is Large ribosomal subunit protein uL1 from Clostridium beijerinckii (strain ATCC 51743 / NCIMB 8052) (Clostridium acetobutylicum).